The primary structure comprises 460 residues: 3-isopropylmalate dehydratase large subunit (460 aa).

The [4Fe-4S] cluster site is built by Cys338, Cys398, and Cys401.

This sequence belongs to the aconitase/IPM isomerase family. LeuC type 1 subfamily. Heterodimer of LeuC and LeuD. Requires [4Fe-4S] cluster as cofactor.

The enzyme catalyses (2R,3S)-3-isopropylmalate = (2S)-2-isopropylmalate. It participates in amino-acid biosynthesis; L-leucine biosynthesis; L-leucine from 3-methyl-2-oxobutanoate: step 2/4. Its function is as follows. Catalyzes the isomerization between 2-isopropylmalate and 3-isopropylmalate, via the formation of 2-isopropylmaleate. This is 3-isopropylmalate dehydratase large subunit from Streptococcus thermophilus (strain ATCC BAA-250 / LMG 18311).